A 238-amino-acid polypeptide reads, in one-letter code: Ribonuclease PH (238 aa).

Phosphate contacts are provided by residues R86 and 124 to 126 (GTR).

Belongs to the RNase PH family. Homohexameric ring arranged as a trimer of dimers.

It carries out the reaction tRNA(n+1) + phosphate = tRNA(n) + a ribonucleoside 5'-diphosphate. In terms of biological role, phosphorolytic 3'-5' exoribonuclease that plays an important role in tRNA 3'-end maturation. Removes nucleotide residues following the 3'-CCA terminus of tRNAs; can also add nucleotides to the ends of RNA molecules by using nucleoside diphosphates as substrates, but this may not be physiologically important. Probably plays a role in initiation of 16S rRNA degradation (leading to ribosome degradation) during starvation. The polypeptide is Ribonuclease PH (Brucella abortus (strain S19)).